The chain runs to 584 residues: Tyrosine-protein kinase Dnt (584 aa).

The N-terminal stretch at Met-1–Gly-40 is a signal peptide. The Extracellular segment spans residues Ser-41–Gly-208. The WIF domain maps to Val-49–Cys-180. 4 N-linked (GlcNAc...) asparagine glycosylation sites follow: Asn-124, Asn-163, Asn-168, and Asn-183. Residues Leu-209–Ile-229 traverse the membrane as a helical segment. Over Ala-230 to Val-584 the chain is Cytoplasmic. Residues Gln-241–His-261 form a disordered region. Residues Met-250–His-261 show a composition bias toward polar residues. In terms of domain architecture, Protein kinase spans Val-317 to Tyr-577. Residues Leu-323 to Val-331 and Lys-345 each bind ATP. The Proton acceptor role is filled by Asp-442. Tyr-472 is modified (phosphotyrosine; by autocatalysis).

This sequence belongs to the protein kinase superfamily. Tyr protein kinase family. In terms of tissue distribution, expressed in dynamic domains in the embryonic epidermis, many of which border on sites of epithelial invagination into the embryo interior, including ventral furrow, cephalic furrow, fore- and hindgut, optic lobe and tracheal pits. Later in embryogenesis, expression is seen in imaginal tissues.

The protein localises to the cell membrane. The catalysed reaction is L-tyrosyl-[protein] + ATP = O-phospho-L-tyrosyl-[protein] + ADP + H(+). Functionally, may play an essential role in neuronal pathway recognition and ventral muscle attachment site selection. This Drosophila melanogaster (Fruit fly) protein is Tyrosine-protein kinase Dnt (dnt).